The sequence spans 217 residues: Protein 33K (217 aa).

Positions Met1 to Arg142 are disordered. The segment covering Gln24–Ile68 has biased composition (acidic residues). A compositionally biased stretch (low complexity) spans Ile69–Lys78. Residues Lys123 to Thr136 show a composition bias toward basic and acidic residues. The tract at residues Tyr160–Cys187 is necessary for nuclear subcellular location. Residues Ser166–Ser186 form an RS-repeat; required for splicing enhancer activity region.

It belongs to the adenoviridae splicing factor family. Homooligomer. Interacts with DBP; this interaction occurs at a unique vertex during genome packaging. Interacts with IVa2; this interaction occurs at a unique vertex during genome packaging and seems to potentiate IVa2 and 33K oligomerization. Phosphorylated in vitro by human PKA and PRKDC. PRKDC inhibits, whereas PKA activates the splicing factor.

The protein localises to the host nucleus. Functionally, promotes alternative splicing of late transcripts by promoting splicing at weak 3' splice sites. Required for the temporal activation of major late pre-mRNA splicing at late times of infection. Induces the splicing and expression of the late capsid vertex protein. In terms of biological role, probably functions as the small terminase that is part of the molecular motor that translocates genomic DNA in empty capsid during DNA packaging. This motor is located at a unique vertex and comprises at least the IVa2 ATPase, the small terminase 33K and probably a portal. Forms a ring-like structure of about 17 nm in which genomic DNA is translocated into the capsid. Stimulates IVa2 ATPase activity in the presence of the viral genome. Once the DNA is packaged, the terminase detaches: the 33K protein is present in the empty particles, but not in the mature virions. Also involved in virion assembly. This is Protein 33K from Human adenovirus F serotype 41 (HAdV-41).